The sequence spans 227 residues: uncharacterized protein (227 aa).

The next 2 helical transmembrane spans lie at 12–32 and 80–100; these read IVLF…YLYA and IILI…KIPL.

The protein resides in the cell membrane. This is an uncharacterized protein from Methanocaldococcus jannaschii (strain ATCC 43067 / DSM 2661 / JAL-1 / JCM 10045 / NBRC 100440) (Methanococcus jannaschii).